Reading from the N-terminus, the 154-residue chain is Low molecular weight protein-tyrosine-phosphatase PtpA (154 aa).

The active-site Nucleophile is Cys8. Arg14 is a catalytic residue. Asp120 (proton donor) is an active-site residue.

It belongs to the low molecular weight phosphotyrosine protein phosphatase family. Interacts with host CORO1A. In terms of processing, phosphorylations at Tyr-122 and Tyr-123 are essential for phosphatase activity.

It localises to the secreted. It carries out the reaction O-phospho-L-tyrosyl-[protein] + H2O = L-tyrosyl-[protein] + phosphate. Its function is as follows. Secreted tyrosine phosphatase that plays a critical role during infection as a bacterial effector protein that counteracts host defenses. Required for intramacrophage survival. This chain is Low molecular weight protein-tyrosine-phosphatase PtpA (ptpA), found in Staphylococcus aureus (strain MSSA476).